The following is a 55-amino-acid chain: Large ribosomal subunit protein bL33 (55 aa).

Belongs to the bacterial ribosomal protein bL33 family.

This chain is Large ribosomal subunit protein bL33, found in Burkholderia ambifaria (strain MC40-6).